Consider the following 828-residue polypeptide: Periplasmic nitrate reductase (828 aa).

A signal peptide (tat-type signal) is located at residues 1-31 (MKLSRRSFMKANAVAAAAAAAGLSVPGVARA). The 4Fe-4S Mo/W bis-MGD-type domain occupies 39 to 95 (IKWDKAPCRFCGTGCGVLVGTQQGRVVACQGDPDAPVNRGLNCIKGYFLPKIMYGKD). Cys46, Cys49, Cys53, and Cys81 together coordinate [4Fe-4S] cluster. Mo-bis(molybdopterin guanine dinucleotide)-binding positions include Lys83, Gln150, Asn175, Cys179, 212–219 (WGSNMAEM), 243–247 (STFQH), 262–264 (QSD), Met372, Gln376, Asn482, 508–509 (SD), Lys531, Asp558, and 718–727 (TGRVLEHWHT). Phe794 serves as a coordination point for substrate. Mo-bis(molybdopterin guanine dinucleotide) is bound by residues Asn802 and Lys819.

Belongs to the prokaryotic molybdopterin-containing oxidoreductase family. NasA/NapA/NarB subfamily. Component of the periplasmic nitrate reductase NapAB complex composed of NapA and NapB. Requires [4Fe-4S] cluster as cofactor. Mo-bis(molybdopterin guanine dinucleotide) is required as a cofactor. Post-translationally, predicted to be exported by the Tat system. The position of the signal peptide cleavage has not been experimentally proven.

The protein resides in the periplasm. It carries out the reaction 2 Fe(II)-[cytochrome] + nitrate + 2 H(+) = 2 Fe(III)-[cytochrome] + nitrite + H2O. Its function is as follows. Catalytic subunit of the periplasmic nitrate reductase complex NapAB. Receives electrons from NapB and catalyzes the reduction of nitrate to nitrite. This is Periplasmic nitrate reductase from Salmonella schwarzengrund (strain CVM19633).